We begin with the raw amino-acid sequence, 65 residues long: Small ribosomal subunit protein eS27 (65 aa).

Cysteine 20, cysteine 23, cysteine 39, and cysteine 42 together coordinate Zn(2+). The C4-type zinc-finger motif lies at 20-42; the sequence is CIDCGNEQIVFSHPATRVRCLVC.

This sequence belongs to the eukaryotic ribosomal protein eS27 family. Part of the 30S ribosomal subunit. Zn(2+) is required as a cofactor.

The sequence is that of Small ribosomal subunit protein eS27 from Pyrococcus horikoshii (strain ATCC 700860 / DSM 12428 / JCM 9974 / NBRC 100139 / OT-3).